A 366-amino-acid polypeptide reads, in one-letter code: tRNA/tmRNA (uracil-C(5))-methyltransferase (366 aa).

Positions 190, 218, 223, 239, and 299 each coordinate S-adenosyl-L-methionine. Cysteine 324 functions as the Nucleophile in the catalytic mechanism. Glutamate 358 serves as the catalytic Proton acceptor.

This sequence belongs to the class I-like SAM-binding methyltransferase superfamily. RNA M5U methyltransferase family. TrmA subfamily.

It carries out the reaction uridine(54) in tRNA + S-adenosyl-L-methionine = 5-methyluridine(54) in tRNA + S-adenosyl-L-homocysteine + H(+). It catalyses the reaction uridine(341) in tmRNA + S-adenosyl-L-methionine = 5-methyluridine(341) in tmRNA + S-adenosyl-L-homocysteine + H(+). Its function is as follows. Dual-specificity methyltransferase that catalyzes the formation of 5-methyluridine at position 54 (m5U54) in all tRNAs, and that of position 341 (m5U341) in tmRNA (transfer-mRNA). In Escherichia coli (strain UTI89 / UPEC), this protein is tRNA/tmRNA (uracil-C(5))-methyltransferase.